Reading from the N-terminus, the 293-residue chain is EID1-like F-box protein 1 (293 aa).

Residues 16–68 enclose the F-box domain; it reads QCTKGHLNEDVLLLVFQHLNWNPKLVATLSCVCRWFDDFAKRVLWKEFCKTRA. Positions 245-293 are disordered; the sequence is AIPSEDNNHTEKKQDNGFPRENVLKRRNSLLGGSENGPPPQKRLTNPNQ. The segment covering 250–259 has biased composition (basic and acidic residues); the sequence is DNNHTEKKQD.

In Arabidopsis thaliana (Mouse-ear cress), this protein is EID1-like F-box protein 1 (EDL1).